We begin with the raw amino-acid sequence, 501 residues long: MMAKKYVLALDQGTTSCRAILFDRDSNIVGVAQKEFTQIYPKPGWVEHNAEEIWSTQYGVIAEVVAKTGIKPEEIASIGITNQRETTVVWNKNTGKPVYNAIVWQCRRTTEICDELKVKGLEETFKKKTGLVVDAYFSGTKVKWILDNVPGTREMAEKGELLFGTMDTWLIWKLTGGQVHVTDYSNASRTLMYNIRELCWDEELLGYLNVPMSLLPTVKASSEVYGYTQPDQFLGHSVPIAGVAGDQQAALFGQACYEPGMAKNTYGTGCFMLMNTGDEVYESKNGLLTTIAWGLDGKVTYALEGSIFIAGAAIQWLRDGLKILESAPDSEYFASKVDGTDGVYLVPAFAGLGAPYWDMRARGAIVGLTRGTTKEHIIRAALDSLAYQTKDVLGAMEADSNIKLQALKVDGGAVANNLLMQFQADILGVPVERPQVIETTALGAAYLAGLAVGFWESKEELAKRWKLDYQFESVMAEDQRNKLYNGWEKAVGRSMDWATEE.

Thr14 contributes to the ADP binding site. ATP contacts are provided by Thr14, Thr15, and Ser16. Thr14 contacts sn-glycerol 3-phosphate. An ADP-binding site is contributed by Arg18. Sn-glycerol 3-phosphate-binding residues include Arg84, Glu85, Tyr136, and Asp246. Glycerol-binding residues include Arg84, Glu85, Tyr136, Asp246, and Gln247. The ADP site is built by Thr268 and Gly311. The ATP site is built by Thr268, Gly311, Gln315, and Gly412. Residues Gly412 and Asn416 each contribute to the ADP site.

Belongs to the FGGY kinase family. In terms of assembly, homotetramer and homodimer (in equilibrium).

It catalyses the reaction glycerol + ATP = sn-glycerol 3-phosphate + ADP + H(+). It functions in the pathway polyol metabolism; glycerol degradation via glycerol kinase pathway; sn-glycerol 3-phosphate from glycerol: step 1/1. Its activity is regulated as follows. Activated by phosphorylation and inhibited by fructose 1,6-bisphosphate (FBP). Its function is as follows. Key enzyme in the regulation of glycerol uptake and metabolism. Catalyzes the phosphorylation of glycerol to yield sn-glycerol 3-phosphate. The sequence is that of Glycerol kinase from Desulforamulus reducens (strain ATCC BAA-1160 / DSM 100696 / MI-1) (Desulfotomaculum reducens).